The sequence spans 808 residues: Protein SEY1 (808 aa).

Positions 1-21 (MSSELSEGELSHTSSSSSFVP) are disordered. At 1–701 (MSSELSEGEL…KRSIVQHITQ (701 aa)) the chain is on the cytoplasmic side. A GB1/RHD3-type G domain is found at 57–286 (GNNYHIISVF…VGDELFKPEY (230 aa)). 67–74 (GSQSTGKS) contacts GTP. The chain crosses the membrane as a helical span at residues 702–722 (IPYYIYLVIVFLGWNEFMAII). At 723 to 725 (RNP) the chain is on the lumenal side. The helical transmembrane segment at 726 to 746 (LLFSLALLLGASVYILYKLNL) threads the bilayer. Topologically, residues 747–808 (LKPAIVVAQR…YSDNIELDDM (62 aa)) are cytoplasmic.

Belongs to the TRAFAC class dynamin-like GTPase superfamily. GB1/RHD3 GTPase family. RHD3 subfamily.

It localises to the endoplasmic reticulum membrane. In terms of biological role, cooperates with the reticulon proteins and tubule-shaping DP1 family proteins to generate and maintain the structure of the tubular endoplasmic reticulum network. Has GTPase activity, which is required for its function in ER organization. The sequence is that of Protein SEY1 from Candida tropicalis (strain ATCC MYA-3404 / T1) (Yeast).